A 222-amino-acid polypeptide reads, in one-letter code: Protein DEHYDRATION-INDUCED 19 homolog 6 (222 aa).

Ser116 carries the phosphoserine modification.

The protein belongs to the Di19 family. Phosphorylated in vitro by CPK3 or CPK11. In terms of tissue distribution, expressed in seedlings, roots, leaves, stems, flowers and siliques.

It is found in the nucleus. The protein is Protein DEHYDRATION-INDUCED 19 homolog 6 (DI19-6) of Arabidopsis thaliana (Mouse-ear cress).